Here is a 244-residue protein sequence, read N- to C-terminus: Phosphoadenosine 5'-phosphosulfate reductase (244 aa).

The Nucleophile; cysteine thiosulfonate intermediate role is filled by cysteine 239.

The protein belongs to the PAPS reductase family. CysH subfamily.

The protein resides in the cytoplasm. The enzyme catalyses [thioredoxin]-disulfide + sulfite + adenosine 3',5'-bisphosphate + 2 H(+) = [thioredoxin]-dithiol + 3'-phosphoadenylyl sulfate. The protein operates within sulfur metabolism; hydrogen sulfide biosynthesis; sulfite from sulfate: step 3/3. Its function is as follows. Catalyzes the formation of sulfite from phosphoadenosine 5'-phosphosulfate (PAPS) using thioredoxin as an electron donor. The protein is Phosphoadenosine 5'-phosphosulfate reductase of Sodalis glossinidius (strain morsitans).